A 242-amino-acid chain; its full sequence is MEGAGPVLSILGLLLVSAPFGVLGERPSADLGAHPERGSQVSPGTTEPRRQPPPKDQRERARAGSLSLGALYTAAVVAFVLFKCLQGPDEAAVLREEKNKKKSSQSEQQLVQLTQQLAQTEQHLNHLMTQLDPLFEQVTTLVGTQRELLDTKLKTIHHLLQDCQPGTGVEVPEPEASIPFTEDLGKEDQEAGNSQAWEEPITWSPETRNLAPSWEVEQGLRRRWHKTVTKGPAVNGEQPLKV.

The N-terminal stretch at 1–24 is a signal peptide; the sequence is MEGAGPVLSILGLLLVSAPFGVLG. A disordered region spans residues 27–62; that stretch reads PSADLGAHPERGSQVSPGTTEPRRQPPPKDQRERAR. Basic and acidic residues predominate over residues 47-62; the sequence is EPRRQPPPKDQRERAR. The chain crosses the membrane as a helical span at residues 65–85; that stretch reads SLSLGALYTAAVVAFVLFKCL. The stretch at 97-132 forms a coiled coil; the sequence is EKNKKKSSQSEQQLVQLTQQLAQTEQHLNHLMTQLD. The tract at residues 186–210 is disordered; sequence KEDQEAGNSQAWEEPITWSPETRNL.

The protein resides in the membrane. This chain is Coiled-coil domain-containing protein 107 (Ccdc107), found in Mus musculus (Mouse).